Reading from the N-terminus, the 241-residue chain is Small ribosomal subunit protein uS10m (241 aa).

The transit peptide at 1 to 54 (MIAGVLRRSSLPSRQTLSAALASFNSCISHNLTPATTGASVSSRFTLASSPNSF) directs the protein to the mitochondrion.

This sequence belongs to the universal ribosomal protein uS10 family. In terms of assembly, component of the mitochondrial ribosome small subunit.

It is found in the mitochondrion. The polypeptide is Small ribosomal subunit protein uS10m (RPS10) (Arabidopsis thaliana (Mouse-ear cress)).